The chain runs to 684 residues: Sec1 family domain-containing protein 2 (684 aa).

The protein belongs to the STXBP/unc-18/SEC1 family.

Its function is as follows. May be involved in protein transport. The protein is Sec1 family domain-containing protein 2 (Scfd2) of Mus musculus (Mouse).